The following is a 171-amino-acid chain: NADH-quinone oxidoreductase subunit I 1 (171 aa).

4Fe-4S ferredoxin-type domains follow at residues 39 to 71 and 81 to 110; these read IVLT…LSKA and EHFR…LTPD. Cysteine 51, cysteine 54, cysteine 57, cysteine 61, cysteine 90, cysteine 93, cysteine 96, and cysteine 100 together coordinate [4Fe-4S] cluster.

The protein belongs to the complex I 23 kDa subunit family. In terms of assembly, NDH-1 is composed of 14 different subunits. Subunits NuoA, H, J, K, L, M, N constitute the membrane sector of the complex. [4Fe-4S] cluster serves as cofactor.

The protein localises to the cell inner membrane. The catalysed reaction is a quinone + NADH + 5 H(+)(in) = a quinol + NAD(+) + 4 H(+)(out). In terms of biological role, NDH-1 shuttles electrons from NADH, via FMN and iron-sulfur (Fe-S) centers, to quinones in the respiratory chain. The immediate electron acceptor for the enzyme in this species is believed to be ubiquinone. Couples the redox reaction to proton translocation (for every two electrons transferred, four hydrogen ions are translocated across the cytoplasmic membrane), and thus conserves the redox energy in a proton gradient. The polypeptide is NADH-quinone oxidoreductase subunit I 1 (Rhodopseudomonas palustris (strain HaA2)).